The chain runs to 416 residues: Serine hydroxymethyltransferase 1 (416 aa).

(6S)-5,6,7,8-tetrahydrofolate contacts are provided by residues Leu-121 and 125–127 (GHL). Residue Lys-229 is modified to N6-(pyridoxal phosphate)lysine. Residues Glu-245 and 354–356 (SPF) each bind (6S)-5,6,7,8-tetrahydrofolate.

Belongs to the SHMT family. Homodimer. Pyridoxal 5'-phosphate serves as cofactor.

The protein localises to the cytoplasm. The catalysed reaction is (6R)-5,10-methylene-5,6,7,8-tetrahydrofolate + glycine + H2O = (6S)-5,6,7,8-tetrahydrofolate + L-serine. It participates in one-carbon metabolism; tetrahydrofolate interconversion. It functions in the pathway amino-acid biosynthesis; glycine biosynthesis; glycine from L-serine: step 1/1. Functionally, catalyzes the reversible interconversion of serine and glycine with tetrahydrofolate (THF) serving as the one-carbon carrier. This reaction serves as the major source of one-carbon groups required for the biosynthesis of purines, thymidylate, methionine, and other important biomolecules. Also exhibits THF-independent aldolase activity toward beta-hydroxyamino acids, producing glycine and aldehydes, via a retro-aldol mechanism. This chain is Serine hydroxymethyltransferase 1, found in Vibrio cholerae serotype O1 (strain ATCC 39315 / El Tor Inaba N16961).